The chain runs to 638 residues: ATP-dependent zinc metalloprotease FtsH (638 aa).

Topologically, residues 1–7 (MRSTYKT) are cytoplasmic. A helical membrane pass occupies residues 8-28 (IGLWVILIVLFVAFYNFFSQG). The Periplasmic segment spans residues 29–102 (NDQVQEPSFT…KYEREEQNSL (74 aa)). The helical transmembrane segment at 103 to 123 (WLTILGQWMPVVFLFLFFIFF) threads the bilayer. Residues 124–638 (MRQLQGGSGK…GLPAMEPKKA (515 aa)) are Cytoplasmic-facing. Position 195 to 202 (195 to 202 (GSPGTGKT)) interacts with ATP. Position 417 (His417) interacts with Zn(2+). The active site involves Glu418. His421 and Asp493 together coordinate Zn(2+). The interval 596-638 (GGQLTRERPPPRVNAPPKATEKKDKRKILDALEGLPAMEPKKA) is disordered. Residues 614 to 625 (ATEKKDKRKILD) show a composition bias toward basic and acidic residues.

The protein in the central section; belongs to the AAA ATPase family. In the C-terminal section; belongs to the peptidase M41 family. As to quaternary structure, homohexamer. Requires Zn(2+) as cofactor.

The protein resides in the cell inner membrane. In terms of biological role, acts as a processive, ATP-dependent zinc metallopeptidase for both cytoplasmic and membrane proteins. Plays a role in the quality control of integral membrane proteins. This Myxococcus xanthus (strain DK1622) protein is ATP-dependent zinc metalloprotease FtsH.